The sequence spans 366 residues: Phospho-N-acetylmuramoyl-pentapeptide-transferase (366 aa).

10 helical membrane-spanning segments follow: residues 27–47, 71–91, 93–113, 134–154, 174–194, 205–225, 245–265, 268–288, 294–314, and 343–363; these read AALFTSALIVFLFGPTIINSL, TPTMGGLMILAGIVGASLLWA, LSNVYVVATLLVTLGFGAIGF, LGIEFVIAGIAVYFMMRTALA, FLINLGIMFVVFGGFVIVGAG, GLAIVPVMIAAASFGVIAYLA, LAVVLGAVIGAGLGFLWFNAP, AIFMGDTGSLALGGTIGTVAV, IVMAIIGGLFVMETLSVIIQV, and QVVIRFWIIAVGLALLGLSTL.

This sequence belongs to the glycosyltransferase 4 family. MraY subfamily. Mg(2+) is required as a cofactor.

The protein localises to the cell inner membrane. It carries out the reaction UDP-N-acetyl-alpha-D-muramoyl-L-alanyl-gamma-D-glutamyl-meso-2,6-diaminopimeloyl-D-alanyl-D-alanine + di-trans,octa-cis-undecaprenyl phosphate = di-trans,octa-cis-undecaprenyl diphospho-N-acetyl-alpha-D-muramoyl-L-alanyl-D-glutamyl-meso-2,6-diaminopimeloyl-D-alanyl-D-alanine + UMP. Its pathway is cell wall biogenesis; peptidoglycan biosynthesis. Catalyzes the initial step of the lipid cycle reactions in the biosynthesis of the cell wall peptidoglycan: transfers peptidoglycan precursor phospho-MurNAc-pentapeptide from UDP-MurNAc-pentapeptide onto the lipid carrier undecaprenyl phosphate, yielding undecaprenyl-pyrophosphoryl-MurNAc-pentapeptide, known as lipid I. This chain is Phospho-N-acetylmuramoyl-pentapeptide-transferase, found in Rhizobium etli (strain ATCC 51251 / DSM 11541 / JCM 21823 / NBRC 15573 / CFN 42).